The chain runs to 178 residues: NADH-ubiquinone oxidoreductase chain 6 (178 aa).

A run of 5 helical transmembrane segments spans residues 1-21 (MMTYIVTILSTIFVVSFVGFS), 25-45 (SPIYGGVGLIVSGGVGCGIVL), 48-68 (GGSFLGLMVFLIYLGGMLVVF), 89-109 (VLLTFLLGLVGEVVLMIYLLL), and 152-172 (YGYWLVIVSGWSLVTCIIVVM).

It belongs to the complex I subunit 6 family.

The protein resides in the mitochondrion membrane. The enzyme catalyses a ubiquinone + NADH + 5 H(+)(in) = a ubiquinol + NAD(+) + 4 H(+)(out). In terms of biological role, core subunit of the mitochondrial membrane respiratory chain NADH dehydrogenase (Complex I) that is believed to belong to the minimal assembly required for catalysis. Complex I functions in the transfer of electrons from NADH to the respiratory chain. The immediate electron acceptor for the enzyme is believed to be ubiquinone. This Pseudosoriculus fumidus (Taiwanese brown-toothed shrew) protein is NADH-ubiquinone oxidoreductase chain 6 (MT-ND6).